Consider the following 359-residue polypeptide: Dihydroorotate dehydrogenase (quinone) (359 aa).

Residues 65–69 and Thr89 each bind FMN; that span reads AGLDK. Lys69 contributes to the substrate binding site. 114–118 contacts substrate; that stretch reads NRLGF. Residues Asn149 and Asn182 each contribute to the FMN site. Asn182 provides a ligand contact to substrate. Catalysis depends on Ser185, which acts as the Nucleophile. Asn187 contacts substrate. Residues Lys233 and Thr261 each coordinate FMN. 262 to 263 is a binding site for substrate; that stretch reads NT. Residues Gly284, Gly313, and 334 to 335 each bind FMN; that span reads YT.

This sequence belongs to the dihydroorotate dehydrogenase family. Type 2 subfamily. Monomer. FMN serves as cofactor.

It is found in the cell membrane. The catalysed reaction is (S)-dihydroorotate + a quinone = orotate + a quinol. It functions in the pathway pyrimidine metabolism; UMP biosynthesis via de novo pathway; orotate from (S)-dihydroorotate (quinone route): step 1/1. Functionally, catalyzes the conversion of dihydroorotate to orotate with quinone as electron acceptor. In Paracidovorax citrulli (strain AAC00-1) (Acidovorax citrulli), this protein is Dihydroorotate dehydrogenase (quinone).